The primary structure comprises 435 residues: MDWLQFFFLHPVSLYQGAAFPFALLFNYLCITESFPTRARYLFLLAGGGVLALAAMGPYALLIFIPALCAVAMISSLSPQEVHGLTFFFQMGWQTLCHLGLHYKEYYLCEPPPVRFYITLSSLMLLTQRVTSLSLDISEGKVEAAWRGTRSRSSLCEHLWDALPYISYLLFFPALLGGSLCSFQRFQACVQRPRSLYPSISFWALTWRGLQILGLECLKVALRRVVSAGAGLDDCQRLECIYIMWSTAGLFKLTYYSHWILDDSLLHAAGFGSEAGQRPGEERYVPDVDIWTLETTHRISLFARQWNRSTAQWLKRLVFQRSRRWPVLQTFAFSAWWHGLHPGQVFGFLCWSVMVKADYLIHTFANGCIRSWPLRLLYRSLTWAHTQIIIAYVMLAVEGRSFSSLCRLCCSYNSIFPVTYCLLLFLLARRKHKCN.

At 1 to 5 (MDWLQ) the chain is on the lumenal side. The chain crosses the membrane as a helical span at residues 6 to 26 (FFFLHPVSLYQGAAFPFALLF). The Cytoplasmic segment spans residues 27 to 40 (NYLCITESFPTRAR). Residues 41-56 (YLFLLAGGGVLALAAM) traverse the membrane as a helical segment. Over 57–59 (GPY) the chain is Lumenal. Residues 60–76 (ALLIFIPALCAVAMISS) traverse the membrane as a helical segment. Residues 77–82 (LSPQEV) lie on the Cytoplasmic side of the membrane. A helical transmembrane segment spans residues 83–101 (HGLTFFFQMGWQTLCHLGL). Residues 102 to 120 (HYKEYYLCEPPPVRFYITL) lie on the Lumenal side of the membrane. A helical membrane pass occupies residues 121 to 136 (SSLMLLTQRVTSLSLD). Topologically, residues 137–206 (ISEGKVEAAW…YPSISFWALT (70 aa)) are cytoplasmic. A helical membrane pass occupies residues 207-227 (WRGLQILGLECLKVALRRVVS). Over 228 to 240 (AGAGLDDCQRLEC) the chain is Lumenal. A helical transmembrane segment spans residues 241–261 (IYIMWSTAGLFKLTYYSHWIL). The Cytoplasmic segment spans residues 262–324 (DDSLLHAAGF…KRLVFQRSRR (63 aa)). Catalysis depends on residues N307 and H338. The helical transmembrane segment at 325–338 (WPVLQTFAFSAWWH) threads the bilayer. The Lumenal portion of the chain corresponds to 339–340 (GL). The helical transmembrane segment at 341 to 357 (HPGQVFGFLCWSVMVKA) threads the bilayer. The Cytoplasmic segment spans residues 358–376 (DYLIHTFANGCIRSWPLRL). Residues 377–397 (LYRSLTWAHTQIIIAYVMLAV) form a helical membrane-spanning segment. Over 398-407 (EGRSFSSLCR) the chain is Lumenal. Residues 408 to 428 (LCCSYNSIFPVTYCLLLFLLA) form a helical membrane-spanning segment. At 429–435 (RRKHKCN) the chain is on the cytoplasmic side.

The protein belongs to the membrane-bound acyltransferase family. As to quaternary structure, monomer. In terms of processing, not glycosylated.

It is found in the endoplasmic reticulum membrane. It catalyses the reaction octanoyl-CoA + L-seryl-[protein] = O-octanoyl-L-seryl-[protein] + CoA. The catalysed reaction is decanoyl-CoA + L-seryl-[protein] = O-decanoyl-L-seryl-[protein] + CoA. The enzyme catalyses L-seryl-[protein] + acetyl-CoA = O-acetyl-L-seryl-[protein] + CoA. It carries out the reaction L-seryl-[protein] + butanoyl-CoA = O-butanoyl-L-seryl-[protein] + CoA. It catalyses the reaction pentanoyl-CoA + L-seryl-[protein] = O-pentanoyl-L-seryl-[protein] + CoA. The catalysed reaction is hexanoyl-CoA + L-seryl-[protein] = O-hexanoyl-L-seryl-[protein] + CoA. The enzyme catalyses heptanoyl-CoA + L-seryl-[protein] = O-heptanoyl-L-seryl-[protein] + CoA. It carries out the reaction nonanoyl-CoA + L-seryl-[protein] = O-nonanoyl-L-seryl-[protein] + CoA. It catalyses the reaction L-seryl-[protein] + dodecanoyl-CoA = O-dodecanoyl-L-seryl-[protein] + CoA. The catalysed reaction is L-seryl-[protein] + tetradecanoyl-CoA = O-tetradecanoyl-L-seryl-[protein] + CoA. The enzyme catalyses a fatty acyl-CoA + L-seryl-[protein] = O-fatty acyl-L-seryl-[protein] + CoA. Functionally, catalyzes ghrelin acylation at 'Ser-3' using preferentially octanoyl-CoA, hexanoyl-CoA and decanoyl-CoA as acyl-CoA donors leading to ghrelin activity. In vitro uses also acyl-CoA donors of different lengths from short-chain (C2) to long-chain fatty acids (C16) knowing that acyl-CoA donors from butanoyl-CoA (C4) to dodecanoyl-CoA (C12) are more efficient compared to longer acyl-CoA donors, such as myristoyl-CoA (C14) and palmitoyl-CoA (C16) that are not efficient. This is Membrane-bound ghrelin O-acyltransferase MBOAT4 from Rattus norvegicus (Rat).